Here is a 517-residue protein sequence, read N- to C-terminus: Legumin A (517 aa).

A signal peptide spans 1–21; it reads MAKLLALSLSFCFLLLGGCFA. 2 cysteine pairs are disulfide-bonded: Cys-31/Cys-64 and Cys-107/Cys-339. The Cupin type-1 1 domain maps to 36 to 232; it reads LDALEPDNRI…AFNVNRHIVD (197 aa). The tract at residues 249–335 is disordered; it reads VKGGLSIISP…SRRQGDNGLE (87 aa). The 150-residue stretch at 345–494 folds into the Cupin type-1 2 domain; that stretch reads LNIGPSSSPD…TFNLQRNEAR (150 aa).

It belongs to the 11S seed storage protein (globulins) family. Hexamer; each subunit is composed of an acidic and a basic chain derived from a single precursor and linked by a disulfide bond.

This protein found in the seeds of many leguminous and non-leguminous plants is the source of sulfur-containing amino acids in seed meals. This chain is Legumin A (LEGA), found in Pisum sativum (Garden pea).